The primary structure comprises 692 residues: Non-hemolytic phospholipase C (692 aa).

The tat-type signal signal peptide spans methionine 1–alanine 35.

It belongs to the bacterial phospholipase C family. Post-translationally, predicted to be exported by the Tat system. The position of the signal peptide cleavage has not been experimentally proven.

The catalysed reaction is a 1,2-diacyl-sn-glycero-3-phosphocholine + H2O = phosphocholine + a 1,2-diacyl-sn-glycerol + H(+). In terms of biological role, hydrolyzes phosphatidylserine as well as phosphatidylcholine. The protein is Non-hemolytic phospholipase C (plcN) of Pseudomonas aeruginosa (strain ATCC 15692 / DSM 22644 / CIP 104116 / JCM 14847 / LMG 12228 / 1C / PRS 101 / PAO1).